The primary structure comprises 431 residues: Adenylosuccinate synthetase (431 aa).

GTP is bound by residues 13–19 and 41–43; these read GDEGKGK and GHT. Residue Asp14 is the Proton acceptor of the active site. Asp14 and Gly41 together coordinate Mg(2+). IMP contacts are provided by residues 14–17, 39–42, Thr130, Arg144, Gln225, Thr240, and Arg304; these read DEGK and NAGH. The active-site Proton donor is the His42. 300–306 provides a ligand contact to substrate; sequence ATTGRAR. GTP is bound by residues Arg306, 332–334, and 414–416; these read KLD and STG.

It belongs to the adenylosuccinate synthetase family. In terms of assembly, homodimer. It depends on Mg(2+) as a cofactor.

It localises to the cytoplasm. The enzyme catalyses IMP + L-aspartate + GTP = N(6)-(1,2-dicarboxyethyl)-AMP + GDP + phosphate + 2 H(+). It functions in the pathway purine metabolism; AMP biosynthesis via de novo pathway; AMP from IMP: step 1/2. Plays an important role in the de novo pathway of purine nucleotide biosynthesis. Catalyzes the first committed step in the biosynthesis of AMP from IMP. The sequence is that of Adenylosuccinate synthetase from Chromohalobacter salexigens (strain ATCC BAA-138 / DSM 3043 / CIP 106854 / NCIMB 13768 / 1H11).